The chain runs to 453 residues: O-methyltransferase bik3 (453 aa).

The disordered stretch occupies residues 1–25; it reads MVSNGISNGTNGTNGTTTNGTNGVN. The segment covering 8 to 25 has biased composition (low complexity); sequence NGTNGTNGTTTNGTNGVN. Asp-305 provides a ligand contact to S-adenosyl-L-methionine. Catalysis depends on His-355, which acts as the Proton acceptor.

The protein belongs to the class I-like SAM-binding methyltransferase superfamily. Cation-independent O-methyltransferase family. COMT subfamily.

It functions in the pathway secondary metabolite biosynthesis. In terms of biological role, O-methyltransferase; part of the gene cluster that mediates the biosynthesis of bikaverin, a red pigment also considered as a mycotoxin. The first stage is catalyzed by the polyketide synthase bik1, which catalyzes the formation of the intermediate SMA76a also knowm as pre-bikaverin. FAD-dependent monooxygenase bik2 might then be responsible for the oxidation of pre-bikaverin to oxo-pre-bikaverin which is in turn methylated by the O-methyltransferase bik3 to me-oxo-pre-bikaverin. A further cycle of oxydation and methylation by bik2 and bik3 leads to the final product of bikaverin, via a nor-bikaverin intermediate. The polypeptide is O-methyltransferase bik3 (Gibberella fujikuroi (strain CBS 195.34 / IMI 58289 / NRRL A-6831) (Bakanae and foot rot disease fungus)).